A 284-amino-acid polypeptide reads, in one-letter code: MSNEISRNWPAPAKLNLFLHINGRRADGYHELQTLFQFIDCCDLLDFRVTQTPELILHSDMSAVVADSDNLILRAAKSLQQATGYPGGAEIWLEKRLPMGGGLGGGSSDAATTLVALNQLWNTQLSNDELATIGLKLGADIPVFIRGFAAFAEGVGERLQAVTPTEFWYLVIAPDAHVSTAAVFQDPLLPRNTPKLGIDTLMSQPWANDCQDLVVSKYPQVAKALGWLLEYAPSRMTGTGACVFGEFSSQQQALAALAKLPSDMQGFVAKGMNISPLIVRLNHP.

Lys-14 is a catalytic residue. An ATP-binding site is contributed by 98 to 108; sequence PMGGGLGGGSS. The active site involves Asp-140.

Belongs to the GHMP kinase family. IspE subfamily.

It catalyses the reaction 4-CDP-2-C-methyl-D-erythritol + ATP = 4-CDP-2-C-methyl-D-erythritol 2-phosphate + ADP + H(+). It functions in the pathway isoprenoid biosynthesis; isopentenyl diphosphate biosynthesis via DXP pathway; isopentenyl diphosphate from 1-deoxy-D-xylulose 5-phosphate: step 3/6. In terms of biological role, catalyzes the phosphorylation of the position 2 hydroxy group of 4-diphosphocytidyl-2C-methyl-D-erythritol. In Shewanella sp. (strain MR-7), this protein is 4-diphosphocytidyl-2-C-methyl-D-erythritol kinase.